The chain runs to 263 residues: Small ribosomal subunit protein uS2 (263 aa).

This sequence belongs to the universal ribosomal protein uS2 family.

This is Small ribosomal subunit protein uS2 from Hyphomonas neptunium (strain ATCC 15444).